The sequence spans 855 residues: Replication factor C small subunit (855 aa).

One can recognise a DOD-type homing endonuclease domain in the interval 185 to 308 (WLGYFLGGGY…IAYALAGFGI (124 aa)).

The protein belongs to the activator 1 small subunits family. RfcS subfamily. Heteromultimer composed of small subunits (RfcS) and large subunits (RfcL). In terms of processing, this protein undergoes a protein self splicing that involves a post-translational excision of the intervening region (intein) followed by peptide ligation.

Part of the RFC clamp loader complex which loads the PCNA sliding clamp onto DNA. The sequence is that of Replication factor C small subunit (rfcS) from Pyrococcus horikoshii (strain ATCC 700860 / DSM 12428 / JCM 9974 / NBRC 100139 / OT-3).